Consider the following 734-residue polypeptide: Photosystem I P700 chlorophyll a apoprotein A2 (734 aa).

The next 8 helical transmembrane spans lie at Ile46–Ala69, Leu135–Gln158, Leu175–Ile199, Ile273–Tyr291, Leu330–Tyr353, Ala369–Ile395, Ala417–His439, and Phe517–Val535. Positions 559 and 568 each coordinate [4Fe-4S] cluster. The next 2 membrane-spanning stretches (helical) occupy residues Ala575–Trp596 and Leu643–Ile665. 3 residues coordinate chlorophyll a: His654, Met662, and Tyr670. A phylloquinone-binding site is contributed by Trp671. The chain crosses the membrane as a helical span at residues Leu707 to Ala727.

The protein belongs to the PsaA/PsaB family. The PsaA/B heterodimer binds the P700 chlorophyll special pair and subsequent electron acceptors. PSI consists of a core antenna complex that captures photons, and an electron transfer chain that converts photonic excitation into a charge separation. The eukaryotic PSI reaction center is composed of at least 11 subunits. It depends on P700 is a chlorophyll a/chlorophyll a' dimer, A0 is one or more chlorophyll a, A1 is one or both phylloquinones and FX is a shared 4Fe-4S iron-sulfur center. as a cofactor.

The protein resides in the plastid. Its subcellular location is the chloroplast thylakoid membrane. It carries out the reaction reduced [plastocyanin] + hnu + oxidized [2Fe-2S]-[ferredoxin] = oxidized [plastocyanin] + reduced [2Fe-2S]-[ferredoxin]. Its function is as follows. PsaA and PsaB bind P700, the primary electron donor of photosystem I (PSI), as well as the electron acceptors A0, A1 and FX. PSI is a plastocyanin-ferredoxin oxidoreductase, converting photonic excitation into a charge separation, which transfers an electron from the donor P700 chlorophyll pair to the spectroscopically characterized acceptors A0, A1, FX, FA and FB in turn. Oxidized P700 is reduced on the lumenal side of the thylakoid membrane by plastocyanin. This is Photosystem I P700 chlorophyll a apoprotein A2 from Chaetosphaeridium globosum (Charophycean green alga).